A 71-amino-acid polypeptide reads, in one-letter code: Small ribosomal subunit protein bS21 (71 aa).

Positions 48–59 (KAAAAVKRHAKK) are enriched in basic residues. The interval 48-71 (KAAAAVKRHAKKVQRENRKFQRLY) is disordered. A compositionally biased stretch (basic and acidic residues) spans 60 to 71 (VQRENRKFQRLY).

This sequence belongs to the bacterial ribosomal protein bS21 family.

The protein is Small ribosomal subunit protein bS21 of Saccharophagus degradans (strain 2-40 / ATCC 43961 / DSM 17024).